We begin with the raw amino-acid sequence, 77 residues long: Distinctin-like peptide (77 aa).

Residues 1 to 19 (LKKSLFLVTFLALVPLFLC) form the signal peptide. Positions 20–39 (EEEKREEENEERQDDDQSEE) are excised as a propeptide.

This sequence belongs to the frog skin active peptide (FSAP) family. In terms of tissue distribution, expressed by the skin glands.

It is found in the secreted. Its function is as follows. Has antimicrobial activity. The protein is Distinctin-like peptide of Pithecopus azureus (Orange-legged monkey tree frog).